A 284-amino-acid polypeptide reads, in one-letter code: MSETLDQWRAGLTLGFAPGHAGRTVLRERAHYGPMLVQRALYPEGPQVCHVAILHPPSGIAGGDALEIRVDVAGGARAALTTPGATRWYKSNGRQASQDVHLRVAAGGRLDWLPLESIFFEEADALARNRIQLESGAAAIGWDLIQLGRVNQSGHWSQGRLHTATELYVDGRLLWVDQGLVGAQDDVRRQVSGLAGFPVHAALWSFGPRLDAEQNEELAGLMPWSDTLRGAATTMPYDATQSLCLVRCLGVHMEDVRAVMTDAWAYLRPRVLDTPAVVPRLWAT.

This sequence belongs to the UreD family. In terms of assembly, ureD, UreF and UreG form a complex that acts as a GTP-hydrolysis-dependent molecular chaperone, activating the urease apoprotein by helping to assemble the nickel containing metallocenter of UreC. The UreE protein probably delivers the nickel.

Its subcellular location is the cytoplasm. Required for maturation of urease via the functional incorporation of the urease nickel metallocenter. This is Urease accessory protein UreD from Bordetella bronchiseptica (strain ATCC BAA-588 / NCTC 13252 / RB50) (Alcaligenes bronchisepticus).